Here is a 578-residue protein sequence, read N- to C-terminus: Vi polysaccharide biosynthesis protein VipC/TviE (578 aa).

It participates in glycan metabolism; Vi-antigen biosynthesis. Its pathway is capsule biogenesis; capsule polysaccharide biosynthesis. This chain is Vi polysaccharide biosynthesis protein VipC/TviE (vipC), found in Salmonella typhi.